Reading from the N-terminus, the 183-residue chain is Probable RNA 2'-phosphotransferase (183 aa).

Belongs to the KptA/TPT1 family.

Removes the 2'-phosphate from RNA via an intermediate in which the phosphate is ADP-ribosylated by NAD followed by a presumed transesterification to release the RNA and generate ADP-ribose 1''-2''-cyclic phosphate (APPR&gt;P). May function as an ADP-ribosylase. The protein is Probable RNA 2'-phosphotransferase of Clostridium perfringens (strain 13 / Type A).